The chain runs to 184 residues: ATP synthase subunit b, chloroplastic (184 aa).

A helical membrane pass occupies residues leucine 27–leucine 49.

It belongs to the ATPase B chain family. As to quaternary structure, F-type ATPases have 2 components, F(1) - the catalytic core - and F(0) - the membrane proton channel. F(1) has five subunits: alpha(3), beta(3), gamma(1), delta(1), epsilon(1). F(0) has four main subunits: a(1), b(1), b'(1) and c(10-14). The alpha and beta chains form an alternating ring which encloses part of the gamma chain. F(1) is attached to F(0) by a central stalk formed by the gamma and epsilon chains, while a peripheral stalk is formed by the delta, b and b' chains.

The protein localises to the plastid. It is found in the chloroplast thylakoid membrane. Its function is as follows. F(1)F(0) ATP synthase produces ATP from ADP in the presence of a proton or sodium gradient. F-type ATPases consist of two structural domains, F(1) containing the extramembraneous catalytic core and F(0) containing the membrane proton channel, linked together by a central stalk and a peripheral stalk. During catalysis, ATP synthesis in the catalytic domain of F(1) is coupled via a rotary mechanism of the central stalk subunits to proton translocation. In terms of biological role, component of the F(0) channel, it forms part of the peripheral stalk, linking F(1) to F(0). This Draba nemorosa (Woodland whitlowgrass) protein is ATP synthase subunit b, chloroplastic.